Consider the following 161-residue polypeptide: RuBisCO chaperone RbcX (161 aa).

Disordered regions lie at residues 1 to 20 and 130 to 161; these read MQFM…KPME and LGAE…SHAD. The span at 147 to 161 shows a compositional bias: polar residues; it reads DSATPDDASNASHAD.

Belongs to the RbcX family. Homodimer. Interacts with the exposed C-terminal peptide of endogenous RbcL ('Lys-460-Asp-470') via its central cleft, as well as C-terminal peptides from other cyanobacterial RbcL. Contacts a second RbcL monomer via its peripheral polar surface.

It localises to the carboxysome. Its subcellular location is the cytoplasm. Its function is as follows. An RbcL-specific chaperone. The central cleft of the RbcX homodimer (RbcX2) binds the C-terminus of an RbcL monomer, stabilizing the C-terminus and probably preventing its reassociation with chaperonin GroEL-ES. At the same time the peripheral region of RbcX2 binds a second RbcL monomer, bridging the RbcL homodimers in the correct orientation. The RbcX2(2)-bound RbcL dimers then assemble into the RbcL8 core (RbcL8-(RbcX2)8). RbcS binding triggers the release of RbcX2. The polypeptide is RuBisCO chaperone RbcX (Synechococcus sp. (strain ATCC 27144 / PCC 6301 / SAUG 1402/1) (Anacystis nidulans)).